The primary structure comprises 579 residues: 2-succinyl-5-enolpyruvyl-6-hydroxy-3-cyclohexene-1-carboxylate synthase (579 aa).

This sequence belongs to the TPP enzyme family. MenD subfamily. As to quaternary structure, homodimer. The cofactor is Mg(2+). Requires Mn(2+) as cofactor. It depends on thiamine diphosphate as a cofactor.

It catalyses the reaction isochorismate + 2-oxoglutarate + H(+) = 5-enolpyruvoyl-6-hydroxy-2-succinyl-cyclohex-3-ene-1-carboxylate + CO2. It participates in quinol/quinone metabolism; 1,4-dihydroxy-2-naphthoate biosynthesis; 1,4-dihydroxy-2-naphthoate from chorismate: step 2/7. Its pathway is quinol/quinone metabolism; menaquinone biosynthesis. Its function is as follows. Catalyzes the thiamine diphosphate-dependent decarboxylation of 2-oxoglutarate and the subsequent addition of the resulting succinic semialdehyde-thiamine pyrophosphate anion to isochorismate to yield 2-succinyl-5-enolpyruvyl-6-hydroxy-3-cyclohexene-1-carboxylate (SEPHCHC). This chain is 2-succinyl-5-enolpyruvyl-6-hydroxy-3-cyclohexene-1-carboxylate synthase, found in Oceanobacillus iheyensis (strain DSM 14371 / CIP 107618 / JCM 11309 / KCTC 3954 / HTE831).